A 260-amino-acid chain; its full sequence is Carbonic anhydrase 2 (260 aa).

The region spanning 3–259 (HGWGYADHNG…LKDRKVCASF (257 aa)) is the Alpha-carbonic anhydrase domain. His64 acts as the Proton donor/acceptor in catalysis. Residues His94, His96, and His119 each contribute to the Zn(2+) site. Substrate is bound at residue 198 to 199 (TT).

It belongs to the alpha-carbonic anhydrase family. It depends on Zn(2+) as a cofactor.

Its subcellular location is the cytoplasm. The enzyme catalyses hydrogencarbonate + H(+) = CO2 + H2O. Catalyzes the reversible hydration of carbon dioxide. The polypeptide is Carbonic anhydrase 2 (ca2) (Pseudaspius hakonensis (Big-scaled redfin)).